A 355-amino-acid chain; its full sequence is UDP-N-acetylglucosamine--N-acetylmuramyl-(pentapeptide) pyrophosphoryl-undecaprenol N-acetylglucosamine transferase (355 aa).

Residues 15 to 17, Asn-127, Arg-163, Ser-191, Ile-244, 263 to 268, and Gln-288 each bind UDP-N-acetyl-alpha-D-glucosamine; these read TGG and ALTVSE.

This sequence belongs to the glycosyltransferase 28 family. MurG subfamily.

It is found in the cell inner membrane. The catalysed reaction is di-trans,octa-cis-undecaprenyl diphospho-N-acetyl-alpha-D-muramoyl-L-alanyl-D-glutamyl-meso-2,6-diaminopimeloyl-D-alanyl-D-alanine + UDP-N-acetyl-alpha-D-glucosamine = di-trans,octa-cis-undecaprenyl diphospho-[N-acetyl-alpha-D-glucosaminyl-(1-&gt;4)]-N-acetyl-alpha-D-muramoyl-L-alanyl-D-glutamyl-meso-2,6-diaminopimeloyl-D-alanyl-D-alanine + UDP + H(+). Its pathway is cell wall biogenesis; peptidoglycan biosynthesis. Functionally, cell wall formation. Catalyzes the transfer of a GlcNAc subunit on undecaprenyl-pyrophosphoryl-MurNAc-pentapeptide (lipid intermediate I) to form undecaprenyl-pyrophosphoryl-MurNAc-(pentapeptide)GlcNAc (lipid intermediate II). The sequence is that of UDP-N-acetylglucosamine--N-acetylmuramyl-(pentapeptide) pyrophosphoryl-undecaprenol N-acetylglucosamine transferase from Escherichia coli O139:H28 (strain E24377A / ETEC).